Consider the following 471-residue polypeptide: Proline--tRNA ligase 2 (471 aa).

The protein belongs to the class-II aminoacyl-tRNA synthetase family. ProS type 3 subfamily. In terms of assembly, homodimer.

It localises to the cytoplasm. It catalyses the reaction tRNA(Pro) + L-proline + ATP = L-prolyl-tRNA(Pro) + AMP + diphosphate. In terms of biological role, catalyzes the attachment of proline to tRNA(Pro) in a two-step reaction: proline is first activated by ATP to form Pro-AMP and then transferred to the acceptor end of tRNA(Pro). This Streptomyces avermitilis (strain ATCC 31267 / DSM 46492 / JCM 5070 / NBRC 14893 / NCIMB 12804 / NRRL 8165 / MA-4680) protein is Proline--tRNA ligase 2.